The chain runs to 474 residues: tRNA-2-methylthio-N(6)-dimethylallyladenosine synthase (474 aa).

An MTTase N-terminal domain is found at 3–120 (KKLHIKTWGC…LPDMIEQVRR (118 aa)). [4Fe-4S] cluster is bound by residues cysteine 12, cysteine 49, cysteine 83, cysteine 157, cysteine 161, and cysteine 164. The 233-residue stretch at 143 to 375 (RAEGPTAFVS…QDRITQQAMR (233 aa)) folds into the Radical SAM core domain. Positions 378–441 (RHMMGTVQRI…TNSLRGKFIR (64 aa)) constitute a TRAM domain.

Belongs to the methylthiotransferase family. MiaB subfamily. As to quaternary structure, monomer. [4Fe-4S] cluster serves as cofactor.

The protein localises to the cytoplasm. It carries out the reaction N(6)-dimethylallyladenosine(37) in tRNA + (sulfur carrier)-SH + AH2 + 2 S-adenosyl-L-methionine = 2-methylsulfanyl-N(6)-dimethylallyladenosine(37) in tRNA + (sulfur carrier)-H + 5'-deoxyadenosine + L-methionine + A + S-adenosyl-L-homocysteine + 2 H(+). Catalyzes the methylthiolation of N6-(dimethylallyl)adenosine (i(6)A), leading to the formation of 2-methylthio-N6-(dimethylallyl)adenosine (ms(2)i(6)A) at position 37 in tRNAs that read codons beginning with uridine. This Shewanella sp. (strain MR-7) protein is tRNA-2-methylthio-N(6)-dimethylallyladenosine synthase.